The primary structure comprises 294 residues: Bifunctional protein FolD (294 aa).

NADP(+) is bound by residues 169–171, threonine 196, and valine 237; that span reads GRG.

Belongs to the tetrahydrofolate dehydrogenase/cyclohydrolase family. In terms of assembly, homodimer.

The catalysed reaction is (6R)-5,10-methylene-5,6,7,8-tetrahydrofolate + NADP(+) = (6R)-5,10-methenyltetrahydrofolate + NADPH. The enzyme catalyses (6R)-5,10-methenyltetrahydrofolate + H2O = (6R)-10-formyltetrahydrofolate + H(+). It functions in the pathway one-carbon metabolism; tetrahydrofolate interconversion. Its function is as follows. Catalyzes the oxidation of 5,10-methylenetetrahydrofolate to 5,10-methenyltetrahydrofolate and then the hydrolysis of 5,10-methenyltetrahydrofolate to 10-formyltetrahydrofolate. This Renibacterium salmoninarum (strain ATCC 33209 / DSM 20767 / JCM 11484 / NBRC 15589 / NCIMB 2235) protein is Bifunctional protein FolD.